A 698-amino-acid chain; its full sequence is Serine/alanine racemase (698 aa).

Residues 1-10 (MKNKGIDQFR) are Cytoplasmic-facing. A helical membrane pass occupies residues 11–31 (VIAAMMVVAIHCLPLHYLWPE). The Extracellular portion of the chain corresponds to 32–42 (GDILITLTIFR). A helical transmembrane segment spans residues 43–63 (VAVPFFFMISGYYVFAELAVA). Over 64–81 (NSYPSRQRVFNFIKKQLK) the chain is Cytoplasmic. Residues 82–102 (VYLLATLMFLPLALYSQTIGF) form a helical membrane-spanning segment. Residues 103 to 121 (DLPVGTLVQVLLVNGILYH) lie on the Extracellular side of the membrane. Residues 122-142 (LWYFPALITGSLLLTSLLIHV) traverse the membrane as a helical segment. Over 143 to 147 (SFKKV) the chain is Cytoplasmic. Residues 148–168 (FWLAAGLYLIGLGGDSWFGLI) form a helical membrane-spanning segment. Topologically, residues 169–183 (QQTPIEPFYTAVFHL) are extracellular. Residues 184 to 204 (LDGTRNGIFFTPLFLCLGVLV) traverse the membrane as a helical segment. Residues 205–216 (RKQSEKRSLSKT) are Cytoplasmic-facing. Residues 217-237 (ALFFLISLIGLLIESAYLHGF) traverse the membrane as a helical segment. The Extracellular portion of the chain corresponds to 238–244 (SIPKHDS). The helical transmembrane segment at 245–265 (MYLFLPVVLFFLFPLILRWHP) threads the bilayer. The Cytoplasmic segment spans residues 266–274 (HRTWKHPGQ). The chain crosses the membrane as a helical span at residues 275–295 (LSLWLYLLHPYTIAGTHFLSQ). The Extracellular portion of the chain corresponds to 296 to 301 (KISILQ). A helical transmembrane segment spans residues 302–322 (NNLINYLVVLILTIGFICLFL). Residues 323–698 (RQKHSWFRHK…IGPRVSARIK (376 aa)) lie on the Cytoplasmic side of the membrane. Residues 332–698 (KQTTPVKRAV…IGPRVSARIK (367 aa)) are racemase. Lysine 371 (proton acceptor) is an active-site residue. N6-(pyridoxal phosphate)lysine is present on lysine 371. Arginine 465 contacts substrate. Residue tyrosine 597 is the Proton acceptor of the active site. Methionine 646 is a substrate binding site.

The protein in the N-terminal section; belongs to the acyltransferase 3 family. It in the C-terminal section; belongs to the alanine racemase family. As to quaternary structure, homodimer. The cofactor is pyridoxal 5'-phosphate.

It localises to the cell membrane. The catalysed reaction is L-alanine = D-alanine. It carries out the reaction L-serine = D-serine. It participates in amino-acid biosynthesis; D-alanine biosynthesis; D-alanine from L-alanine: step 1/1. Its function is as follows. Catalyzes the interconversion of L-serine and D-serine, and L-alanine and D-alanine. L-alanine is racemized at a rate that is 14% of that of L-serine. Together with VanC/VanC1 and VanXYC, required for vancomycin resistance in E.gallinarum strain BM4174. The polypeptide is Serine/alanine racemase (Enterococcus gallinarum).